The primary structure comprises 312 residues: DNA-directed RNA polymerase subunit alpha (312 aa).

The segment at 1–229 (MLQYQIDRID…ELFQPLATVS (229 aa)) is alpha N-terminal domain (alpha-NTD). The tract at residues 239–312 (EPAAEAQIPL…ISIPQSRTSA (74 aa)) is alpha C-terminal domain (alpha-CTD).

This sequence belongs to the RNA polymerase alpha chain family. In terms of assembly, in cyanobacteria the RNAP catalytic core is composed of 2 alpha, 1 beta, 1 beta', 1 gamma and 1 omega subunit. When a sigma factor is associated with the core the holoenzyme is formed, which can initiate transcription.

It catalyses the reaction RNA(n) + a ribonucleoside 5'-triphosphate = RNA(n+1) + diphosphate. DNA-dependent RNA polymerase catalyzes the transcription of DNA into RNA using the four ribonucleoside triphosphates as substrates. The polypeptide is DNA-directed RNA polymerase subunit alpha (Prochlorococcus marinus (strain NATL1A)).